Here is a 470-residue protein sequence, read N- to C-terminus: 6-phospho-beta-galactosidase 1 (470 aa).

D-galactose 6-phosphate is bound by residues Gln-23, His-120, Asn-163, Glu-164, and Asn-300. Glu-164 serves as the catalytic Proton donor. Catalysis depends on Glu-378, which acts as the Nucleophile. 4 residues coordinate D-galactose 6-phosphate: Ser-434, Trp-435, Lys-441, and Tyr-443.

The protein belongs to the glycosyl hydrolase 1 family.

The catalysed reaction is a 6-phospho-beta-D-galactoside + H2O = D-galactose 6-phosphate + an alcohol. Its pathway is carbohydrate metabolism; lactose degradation; D-galactose 6-phosphate and beta-D-glucose from lactose 6-phosphate: step 1/1. This is 6-phospho-beta-galactosidase 1 from Streptococcus pneumoniae (strain ATCC BAA-255 / R6).